Consider the following 161-residue polypeptide: Allophycocyanin alpha chain (161 aa).

Asparagine 71 carries the N4-methylasparagine modification. Cysteine 81 lines the (2R,3E)-phycocyanobilin pocket.

It belongs to the phycobiliprotein family. As to quaternary structure, heterodimer of an alpha and a beta chain. Post-translationally, contains one covalently linked phycocyanobilin chromophore.

It localises to the plastid. The protein resides in the chloroplast thylakoid membrane. In terms of biological role, light-harvesting photosynthetic bile pigment-protein from the phycobiliprotein complex. Allophycocyanin has a maximum absorption at approximately 650 nanometers. In Aglaothamnion neglectum (Red alga), this protein is Allophycocyanin alpha chain (apcA).